A 252-amino-acid chain; its full sequence is CD99 antigen-like protein 2 (252 aa).

Residues 1–23 (MEKTLWTWTLLAVFSLLVVKGMS) form the signal peptide. Residues 30-170 (DALGDDDDDE…DLDPADDNNY (141 aa)) form a disordered region. Residues 57-68 (AAVKPTLKPVKP) show a composition bias toward low complexity. Residues 96–120 (NDIKGKGKDSGKGDKEVGGGSRDDG) are compositionally biased toward basic and acidic residues. The helical transmembrane segment at 178–198 (TIAGIVSAVAMALVGAVSSYI) threads the bilayer.

The protein belongs to the CD99 family.

It localises to the cell membrane. It is found in the cell junction. Functionally, may function as a homophilic adhesion molecule. The protein is CD99 antigen-like protein 2 (cd99l2) of Danio rerio (Zebrafish).